The chain runs to 351 residues: Nicotinate-nucleotide--dimethylbenzimidazole phosphoribosyltransferase (351 aa).

Catalysis depends on glutamate 317, which acts as the Proton acceptor.

This sequence belongs to the CobT family.

It catalyses the reaction 5,6-dimethylbenzimidazole + nicotinate beta-D-ribonucleotide = alpha-ribazole 5'-phosphate + nicotinate + H(+). It functions in the pathway nucleoside biosynthesis; alpha-ribazole biosynthesis; alpha-ribazole from 5,6-dimethylbenzimidazole: step 1/2. Functionally, catalyzes the synthesis of alpha-ribazole-5'-phosphate from nicotinate mononucleotide (NAMN) and 5,6-dimethylbenzimidazole (DMB). The sequence is that of Nicotinate-nucleotide--dimethylbenzimidazole phosphoribosyltransferase from Pseudomonas putida (strain GB-1).